An 887-amino-acid chain; its full sequence is CWF19-like protein 2 (887 aa).

The tract at residues 1–143 (MEAFSVRFES…DKRTEEECDS (143 aa)) is disordered. Residues 11–103 (ASSIEERKEQ…KKQKCQKQSE (93 aa)) adopt a coiled-coil conformation. The segment covering 14–72 (IEERKEQTRNARAEVLRQAKHNFEKEQRGEERKRLRDEDTWMLPDVHERIEQFSQEHSE) has biased composition (basic and acidic residues). A Phosphoserine modification is found at S71. Residues 73–98 (KKKKKKDKHSKKVKKEKKKKRKKQKC) are compositionally biased toward basic residues. Residues 99–110 (QKQSESTDSSAS) are compositionally biased toward low complexity. Positions 124 to 143 (SDKEKTWKVKDKRTEEECDS) are enriched in basic and acidic residues. Residues 164–254 (SSSLKAEKET…RNFEDIVAEK (91 aa)) are a coiled coil. K168 is covalently cross-linked (Glycyl lysine isopeptide (Lys-Gly) (interchain with G-Cter in SUMO2)). 2 disordered regions span residues 315 to 370 (LEME…DEDE) and 405 to 447 (SEES…GRRE). Over residues 342–352 (CRRESALRKNQ) the composition is skewed to basic and acidic residues. S354 and S366 each carry phosphoserine. A compositionally biased stretch (basic and acidic residues) spans 414 to 430 (RSDRRQENRKPSDKKPL). Polar residues predominate over residues 433 to 442 (WSYNANQHST). S478 carries the phosphoserine modification. Residues 495 to 524 (IKAEMMGNMELAEQLKAQLKEANKFKETQM) are a coiled coil. A Glycyl lysine isopeptide (Lys-Gly) (interchain with G-Cter in SUMO2) cross-link involves residue K597. At S622 the chain carries Phosphoserine.

The protein belongs to the CWF19 family.

The sequence is that of CWF19-like protein 2 (Cwf19l2) from Mus musculus (Mouse).